A 580-amino-acid polypeptide reads, in one-letter code: RuBisCO large subunit-binding protein subunit alpha, chloroplastic (580 aa).

The segment covering 1-17 (MAQSQLAKGSRQTTGRP) has biased composition (polar residues). The interval 1–24 (MAQSQLAKGSRQTTGRPFQNKPAR) is disordered.

This sequence belongs to the chaperonin (HSP60) family. As to quaternary structure, oligomer of probably six alpha and six beta subunits.

The protein resides in the plastid. It localises to the chloroplast. Its function is as follows. This protein binds RuBisCO small and large subunits and is implicated in the assembly of the enzyme oligomer. This is RuBisCO large subunit-binding protein subunit alpha, chloroplastic from Chlamydomonas reinhardtii (Chlamydomonas smithii).